Here is a 255-residue protein sequence, read N- to C-terminus: MNDLSGKTVIITGGARGLGAEAARQAVAAGARVVLADVLDEEGAATARELGDAARYQHLDVTIEEDWQRVVAYAREEFGSVDGLVNNAGISTGMFLETESVERFRKVVDINLTGVFIGMKTVIPAMKDAGGGSIVNISSAAGLMGLALTSSYGASKWGVRGLSKLAAVELGTDRIRVNSVHPGMTYTPMTAETGIRQGEGNYPNTPMGRVGNEPGEIAGAVVKLLSDTSSYVTGAELAVDGGWTTGPTVKYVMGQ.

10 to 34 (IITGGARGLGAEAARQAVAAGARVV) is an NAD(+) binding site. Ser139 serves as a coordination point for substrate. Tyr152 functions as the Proton acceptor in the catalytic mechanism.

It belongs to the short-chain dehydrogenases/reductases (SDR) family. In terms of assembly, homotetramer.

It catalyses the reaction androstan-3alpha,17beta-diol + NAD(+) = 17beta-hydroxyandrostanone + NADH + H(+). It functions in the pathway lipid metabolism; C21-steroid hormone metabolism. This Streptomyces exfoliatus (Streptomyces hydrogenans) protein is 3-alpha-(or 20-beta)-hydroxysteroid dehydrogenase.